The chain runs to 212 residues: ECF RNA polymerase sigma factor SigD (212 aa).

The interval 49 to 119 is sigma-70 factor domain-2; that stretch reads ETIRPIVVRY…VADAHRAAGR (71 aa). The Polymerase core binding motif lies at 75–78; the sequence is DVAQ. The sigma-70 factor domain-4 stretch occupies residues 152 to 201; it reads NELLEILPAKQREILILRVVVGLSAEETAAAVGSTTGAVRVAQHRALQRL. Residues 176–195 constitute a DNA-binding region (H-T-H motif); that stretch reads AEETAAAVGSTTGAVRVAQH.

This sequence belongs to the sigma-70 factor family. ECF subfamily. Interacts transiently with the RNA polymerase catalytic core formed by RpoA, RpoB, RpoC and RpoZ (2 alpha, 1 beta, 1 beta' and 1 omega subunit) to form the RNA polymerase holoenzyme that can initiate transcription. Interacts (via sigma-70 factor domain 4) with RsdA.

Functionally, sigma factors are initiation factors that promote the attachment of RNA polymerase to specific initiation sites and are then released. Extracytoplasmic function (ECF) sigma factors are held in an inactive form by an anti-sigma factor until released by regulated intramembrane proteolysis. In Mycobacterium bovis (strain ATCC BAA-935 / AF2122/97), this protein is ECF RNA polymerase sigma factor SigD (sigD).